The chain runs to 138 residues: Small ribosomal subunit protein uS11c (138 aa).

Residues 1–22 are disordered; sequence MAKPILRIGSRKNTRSGSRKNV. A compositionally biased stretch (basic residues) spans 9–22; the sequence is GSRKNTRSGSRKNV.

This sequence belongs to the universal ribosomal protein uS11 family. In terms of assembly, part of the 30S ribosomal subunit.

The protein resides in the plastid. It localises to the chloroplast. In Arabis hirsuta (Hairy rock-cress), this protein is Small ribosomal subunit protein uS11c.